A 78-amino-acid polypeptide reads, in one-letter code: RNA-binding protein Hfq (78 aa).

In terms of domain architecture, Sm spans 10–69 (DPFLNALRKEHVPVSIYLVNGIKLQGNIESFDQYVVLLRNTVTQMVYKHAISTVVPARPV).

The protein belongs to the Hfq family. Homohexamer.

Its function is as follows. RNA chaperone that binds small regulatory RNA (sRNAs) and mRNAs to facilitate mRNA translational regulation in response to envelope stress, environmental stress and changes in metabolite concentrations. Also binds with high specificity to tRNAs. This chain is RNA-binding protein Hfq, found in Paraburkholderia phytofirmans (strain DSM 17436 / LMG 22146 / PsJN) (Burkholderia phytofirmans).